Consider the following 501-residue polypeptide: U6 snRNA (guanine-N(2))-methyltransferase THUMPD2 (501 aa).

One can recognise a THUMP domain in the interval 149–264; that stretch reads TEQIQELQET…DVYSVLGIPV (116 aa). The tract at residues 414 to 469 is disordered; it reads LKGGEASSGPLNSQGGHTEEPGGEERLTPAEKAAVSEPVSSPFAASNQGRLDRMPP. The segment covering 430–442 has biased composition (basic and acidic residues); that stretch reads HTEEPGGEERLTP.

It belongs to the methyltransferase superfamily. In terms of assembly, part of the heterodimeric THUMPD2-TRM112 methyltransferase complex; this complex forms an active tRNA methyltransferase, where TRMT112 acts as an activator of the catalytic subunit THUMPD2.

It localises to the nucleus. It catalyses the reaction guanosine in U6 snRNA + S-adenosyl-L-methionine = N(2)-methylguanosine in U6 snRNA + S-adenosyl-L-homocysteine + H(+). Functionally, catalytic subunit of the THUMPD2-TRM112 methyltransferase complex, that specifically mediates the S-adenosyl-L-methionine-dependent N(2)-methylation of guanosine nucleotides, most probably at position 72 (m2G72), in the U6snRNA of the major spliceosome. This modification in the U6 snRNA affects the constitutive splicing efficiency of introns that have suboptimal splice sites and can impact final mRNA levels. The chain is U6 snRNA (guanine-N(2))-methyltransferase THUMPD2 from Bos taurus (Bovine).